We begin with the raw amino-acid sequence, 816 residues long: Larval serum protein 1 alpha chain (816 aa).

Residues 1–16 (MKFAIAFLACVAVVTA) form the signal peptide.

The protein belongs to the hemocyanin family. Heterohexamer, composed of three subunits, alpha, beta and gamma. As to expression, larval hemolymph.

The protein localises to the secreted. The protein resides in the extracellular space. Its function is as follows. Larval storage protein (LSP) which may serve as a store of amino acids for synthesis of adult proteins. This chain is Larval serum protein 1 alpha chain (Lsp1alpha), found in Drosophila melanogaster (Fruit fly).